Consider the following 276-residue polypeptide: Large ribosomal subunit protein uL2 (276 aa).

Disordered regions lie at residues 36-58 (PLHK…GGGH) and 214-276 (LGKR…RRKK).

This sequence belongs to the universal ribosomal protein uL2 family. Part of the 50S ribosomal subunit. Forms a bridge to the 30S subunit in the 70S ribosome.

One of the primary rRNA binding proteins. Required for association of the 30S and 50S subunits to form the 70S ribosome, for tRNA binding and peptide bond formation. It has been suggested to have peptidyltransferase activity; this is somewhat controversial. Makes several contacts with the 16S rRNA in the 70S ribosome. In Halalkalibacterium halodurans (strain ATCC BAA-125 / DSM 18197 / FERM 7344 / JCM 9153 / C-125) (Bacillus halodurans), this protein is Large ribosomal subunit protein uL2.